We begin with the raw amino-acid sequence, 549 residues long: MLSDIEITHQTKLEHISKVAAKLGLNEDELELYGKFKAKISPRLEPSNSKLILVTATNPTPYGEGKTTMSIGLADALNSLNKKVCLALREPSLGPVFGIKGGAAGGGYSQLAPMEDLNLHFTGDFHAITSANNLISAMIDNSLYQENPLKIEKILWKRCMDMNDRALRFITVGQGGRTDGVPREDGFNITAASEIMAVLCLATSLSDLKERVANIMVAYDSDKKPIYVRDLGCEDAVCILLKDAIKPNLFQTLEHTPTLVHGGPFANIAHGCNSVIATKTALNLADYVITEAGFGSELGAEKFLDIKCRVAEIKPSAVVLVSTIRSLKYNGEANKDEITKPDMNALKKGIENLGGHIENLKGKFGQNVVVALNKFGFDTDEEINFVKEYCQKLGIEVAVCENFLKGGKGALELAELVLKACDKPSKINFTYEMSDDTKTKIEKVAKEIYGAGEVVFEEAALKKLEMIKELNLSHLPVCIAKTQYSFSDDAKLLGRAKGFTFSVKDLDIRTGAGFIVAVCGKIMLMPGLPKVPAAVNMKIDAEGKIDGLS.

60-67 (TPYGEGKT) contacts ATP.

It belongs to the formate--tetrahydrofolate ligase family.

The catalysed reaction is (6S)-5,6,7,8-tetrahydrofolate + formate + ATP = (6R)-10-formyltetrahydrofolate + ADP + phosphate. It participates in one-carbon metabolism; tetrahydrofolate interconversion. The polypeptide is Formate--tetrahydrofolate ligase (Campylobacter concisus (strain 13826)).